The chain runs to 397 residues: Putative gustatory receptor 93c (397 aa).

The Cytoplasmic portion of the chain corresponds to 1–12 (MIERLKKVSLPA). A helical membrane pass occupies residues 13 to 33 (LSAFILFCSCHYGRILGVICF). The Extracellular portion of the chain corresponds to 34-87 (DIGQRTSDDSLVVRNRHQFKWFCLSCRLISVTAVCCFCAPYVADIEDPYERLLQ). Residues 88 to 108 (CFRLSASLICGICIIVVQVCY) form a helical membrane-spanning segment. Residues 109–141 (EKELLRMIISFLRLFRRVRRLSSLKRIGFGGKR) lie on the Cytoplasmic side of the membrane. The chain crosses the membrane as a helical span at residues 142–162 (EFFLLLFKFICLVYELYSEIC). At 163–179 (QLWHLPDSLSLFATLCE) the chain is on the extracellular side. A helical transmembrane segment spans residues 180–200 (IFLEIGSLMIIHIGFVGYLSV). Topologically, residues 201 to 266 (AALYSEVNSF…RTFHRLLELP (66 aa)) are cytoplasmic. A helical membrane pass occupies residues 267–287 (VLIILLGKIFATTILSYEVII). Residues 288-295 (RPELYARK) lie on the Extracellular side of the membrane. The helical transmembrane segment at 296 to 316 (IGMWGLVVKSFADVILLTLAV) threads the bilayer. Over 317 to 371 (HEAVSSSRMMRRLSLENFPITDHKAWHMKWEMFLSRLNFFEFRVRPLGLFEVSNE) the chain is Cytoplasmic. Residues 372-392 (VILLFLSSMITYFTYVVQYGI) traverse the membrane as a helical segment. At 393-397 (QTNRL) the chain is on the extracellular side.

Belongs to the insect chemoreceptor superfamily. Gustatory receptor (GR) family. Gr93a subfamily. As to expression, in larvae, is expressed in neurons of the posterior pharyngeal sense organ.

The protein localises to the cell membrane. Functionally, probable gustatory receptor which mediates acceptance or avoidance behavior, depending on its substrates. This chain is Putative gustatory receptor 93c (Gr93c), found in Drosophila melanogaster (Fruit fly).